Reading from the N-terminus, the 83-residue chain is Calsensin (83 aa).

EF-hand domains are found at residues lysine 4–tyrosine 39 and lysine 46–glutamine 81. 10 residues coordinate Ca(2+): aspartate 17, asparagine 19, aspartate 21, tyrosine 23, glutamate 28, aspartate 59, asparagine 61, aspartate 63, lysine 65, and glutamate 70.

In terms of tissue distribution, selectively expressed in a small group of neurons.

Its subcellular location is the cytoplasm. In terms of biological role, may function as a trigger protein which interacts with a larger protein. May mediate calcium-dependent signal transduction events in the growth cones and axons of a small group of sensory neurons which fasciculate in a single axon tract. This Haemopis marmorata (Green horse leech) protein is Calsensin.